A 162-amino-acid polypeptide reads, in one-letter code: NADH-quinone oxidoreductase subunit I (162 aa).

4Fe-4S ferredoxin-type domains lie at 52 to 82 (LRRY…IEAG) and 93 to 122 (VRYD…EGPN). Residues Cys62, Cys65, Cys68, Cys72, Cys102, Cys105, Cys108, and Cys112 each contribute to the [4Fe-4S] cluster site.

It belongs to the complex I 23 kDa subunit family. As to quaternary structure, NDH-1 is composed of 14 different subunits. Subunits NuoA, H, J, K, L, M, N constitute the membrane sector of the complex. The cofactor is [4Fe-4S] cluster.

The protein resides in the cell inner membrane. It carries out the reaction a quinone + NADH + 5 H(+)(in) = a quinol + NAD(+) + 4 H(+)(out). NDH-1 shuttles electrons from NADH, via FMN and iron-sulfur (Fe-S) centers, to quinones in the respiratory chain. The immediate electron acceptor for the enzyme in this species is believed to be ubiquinone. Couples the redox reaction to proton translocation (for every two electrons transferred, four hydrogen ions are translocated across the cytoplasmic membrane), and thus conserves the redox energy in a proton gradient. This is NADH-quinone oxidoreductase subunit I from Afipia carboxidovorans (strain ATCC 49405 / DSM 1227 / KCTC 32145 / OM5) (Oligotropha carboxidovorans).